The sequence spans 293 residues: Ribosomal protein L11 methyltransferase (293 aa).

S-adenosyl-L-methionine is bound by residues T145, G166, D188, and N230.

It belongs to the methyltransferase superfamily. PrmA family.

The protein localises to the cytoplasm. It carries out the reaction L-lysyl-[protein] + 3 S-adenosyl-L-methionine = N(6),N(6),N(6)-trimethyl-L-lysyl-[protein] + 3 S-adenosyl-L-homocysteine + 3 H(+). Methylates ribosomal protein L11. The polypeptide is Ribosomal protein L11 methyltransferase (Klebsiella pneumoniae (strain 342)).